The following is a 408-amino-acid chain: Histidine--tRNA ligase (408 aa).

This sequence belongs to the class-II aminoacyl-tRNA synthetase family. In terms of assembly, homodimer.

The protein resides in the cytoplasm. It carries out the reaction tRNA(His) + L-histidine + ATP = L-histidyl-tRNA(His) + AMP + diphosphate + H(+). This chain is Histidine--tRNA ligase, found in Campylobacter jejuni subsp. jejuni serotype O:23/36 (strain 81-176).